Consider the following 453-residue polypeptide: Tubulin alpha-13 chain (453 aa).

Q11 serves as a coordination point for GTP. K40 bears the N6-acetyllysine mark. Residues E71, S140, G144, T145, T179, N206, and N228 each contribute to the GTP site. E71 provides a ligand contact to Mg(2+). E254 is a catalytic residue. The interval 429–453 is disordered; the sequence is EKDYEEVGTESQEGDGEEGEDGGDQ. The span at 431–453 shows a compositional bias: acidic residues; it reads DYEEVGTESQEGDGEEGEDGGDQ.

It belongs to the tubulin family. As to quaternary structure, dimer of alpha and beta chains. A typical microtubule is a hollow water-filled tube with an outer diameter of 25 nm and an inner diameter of 15 nM. Alpha-beta heterodimers associate head-to-tail to form protofilaments running lengthwise along the microtubule wall with the beta-tubulin subunit facing the microtubule plus end conferring a structural polarity. Microtubules usually have 13 protofilaments but different protofilament numbers can be found in some organisms and specialized cells. Mg(2+) is required as a cofactor. Acetylation of alpha chains at Lys-40 stabilizes microtubules and affects affinity and processivity of microtubule motors. This modification has a role in multiple cellular functions, ranging from cell motility, cell cycle progression or cell differentiation to intracellular trafficking and signaling.

It is found in the cytoplasm. The protein resides in the cytoskeleton. The catalysed reaction is GTP + H2O = GDP + phosphate + H(+). Tubulin is the major constituent of microtubules, a cylinder consisting of laterally associated linear protofilaments composed of alpha- and beta-tubulin heterodimers. Microtubules grow by the addition of GTP-tubulin dimers to the microtubule end, where a stabilizing cap forms. Below the cap, tubulin dimers are in GDP-bound state, owing to GTPase activity of alpha-tubulin. This Naegleria pringsheimi (Amoeba) protein is Tubulin alpha-13 chain (TUBA13).